The primary structure comprises 365 residues: S-type anion channel SLAH4 (365 aa).

Residues 1–25 (MEIPSQEIHIMIDNTISRRKERKTN) lie on the Cytoplasmic side of the membrane. Residues 26-46 (LADAEPIVLMSVLSSLHAGYF) form a helical membrane-spanning segment. The Extracellular segment spans residues 47–73 (RISLSLCSQALLWKIMVHLHSELPSMA). Residues 74 to 94 (YYLLWYLALATQVSLCFLYAF) traverse the membrane as a helical segment. Topologically, residues 95–106 (KCIFLFDMVKEE) are cytoplasmic. Residues 107 to 127 (FSHYIGVNYLYAPSISCLLLL) traverse the membrane as a helical segment. The Extracellular portion of the chain corresponds to 128–131 (QSAP). A helical membrane pass occupies residues 132 to 152 (MIEPHSVLYQTLFWIFAVPVL). Residues 153–168 (TLDTKLYGQWFTTEKR) lie on the Cytoplasmic side of the membrane. The helical transmembrane segment at 169-189 (FLSIMANPASQVSVIANLVAA) threads the bilayer. The Extracellular portion of the chain corresponds to 190–199 (RGAAEMGWKE). A helical transmembrane segment spans residues 200 to 220 (CALCLFSLGMVHYLVIFVTLY). Residues 221–235 (QRLPGGNNFPTTLRP) lie on the Cytoplasmic side of the membrane. Residues 236–256 (VFFLFFAAPATASLAWNSICG) traverse the membrane as a helical segment. Position 257 (asparagine 257) is a topological domain, extracellular. Residues 258 to 278 (FDTIAKMLFFLSLFIFISLVC) form a helical membrane-spanning segment. Over 279 to 291 (RPNLLKKSIKRFN) the chain is Cytoplasmic. Residues 292–312 (VAWWAYSFPITFLALNSVQYA) form a helical membrane-spanning segment. At 313 to 321 (QEVKDHVAS) the chain is on the extracellular side. Residues 322–342 (VLMFIFSSMSVLIFISVMLLT) traverse the membrane as a helical segment. The Cytoplasmic segment spans residues 343-365 (AANSKRLLRRDHVLWSSTGPKDK).

It belongs to the SLAC1 S-type anion channel family. Homotrimer.

It localises to the cell membrane. Its function is as follows. Slow, weak voltage-dependent S-type anion efflux channel involved in maintenance of anion homeostasis. The sequence is that of S-type anion channel SLAH4 (SLAH4) from Arabidopsis thaliana (Mouse-ear cress).